The primary structure comprises 376 residues: uncharacterized protein (376 aa).

It belongs to the glycosyltransferase 28 family.

This is an uncharacterized protein from Methanosarcina mazei (strain ATCC BAA-159 / DSM 3647 / Goe1 / Go1 / JCM 11833 / OCM 88) (Methanosarcina frisia).